Consider the following 21-residue polypeptide: Putative pancreatic polypeptide 2 (21 aa).

This sequence belongs to the NPY family.

The chain is Putative pancreatic polypeptide 2 (PPY2P) from Homo sapiens (Human).